Consider the following 175-residue polypeptide: Cytochrome c6, chloroplastic (175 aa).

Heme c is bound by residues C86, C89, and H90. 98 to 102 (QPGAT) contacts heme. M130 is a heme c binding site.

The protein belongs to the cytochrome c family. PetJ subfamily. Monomer. Interacts in vitro with LTO1. In terms of processing, binds 1 heme c group covalently per subunit.

It localises to the plastid. Its subcellular location is the chloroplast thylakoid lumen. Functions as an electron carrier between membrane-bound cytochrome b6-f and photosystem I in oxygenic photosynthesis. This chain is Cytochrome c6, chloroplastic (PETJ), found in Arabidopsis thaliana (Mouse-ear cress).